The following is a 145-amino-acid chain: MAALGWLPGIRIDQAESWEDVGIIKEAVNLAEEKATAKTSVLLEETRIFEAPKDLAENSNVMKWMKEKGFKTEREMRLWCSANYIQFWGEMAKTYADWFEPWSSTLEWKPPYAKWFVGGKCNVTHNCVDRHAQGAKKIRWPYIRA.

This is an uncharacterized protein from Methanothrix soehngenii (Methanosaeta concilii).